The following is a 511-amino-acid chain: Early growth response protein 1 (511 aa).

2 disordered regions span residues 133–169 (ASIPSSTSQATHPSSSSTSSIPSSSSSSTSSASLSCS) and 291–312 (PSRMRKYPNRPSKTPPHERPYA). A compositionally biased stretch (low complexity) spans 137 to 169 (SSTSQATHPSSSSTSSIPSSSSSSTSSASLSCS). 3 C2H2-type zinc fingers span residues 311-335 (YACPVETCDRRFSRSDELTRHIRIH), 341-363 (FQCRICMRNFSRSDHLTTHIRTH), and 369-391 (FACEICGRKFARSDERKRHTKIH). Residues 384 to 406 (RKRHTKIHMRQKDKKAEKGATAA) form a disordered region. Over residues 386–396 (RHTKIHMRQKD) the composition is skewed to basic residues.

Belongs to the EGR C2H2-type zinc-finger protein family. Detected in muscle and brain.

It localises to the nucleus. It is found in the cytoplasm. Functionally, transcriptional regulator. Recognizes and binds to the DNA sequence 5'-GCG(T/G)GGGCG-3'(EGR-site) in the promoter region of target genes. Binds double-stranded target DNA, irrespective of the cytosine methylation status. Regulates the transcription of numerous target genes, and thereby plays an important role in regulating the response to growth factors, DNA damage, and ischemia. Plays a role in the regulation of cell survival, proliferation and cell death. Mediates responses to ischemia and hypoxia; regulates the expression of proteins that are involved in inflammatory processes. Plays a role in regulating the expression of circadian clock genes. Plays a role in the organization of Muller glia cells in the inner and outer plexiform layers of the retina. This is Early growth response protein 1 (egr1) from Danio rerio (Zebrafish).